The sequence spans 247 residues: CDP-diacylglycerol pyrophosphatase (247 aa).

Residues 5 to 22 (IVLALVVSVAVAGGWLWM) form a helical membrane-spanning segment.

Belongs to the Cdh family.

The protein resides in the cell inner membrane. The catalysed reaction is a CDP-1,2-diacyl-sn-glycerol + H2O = a 1,2-diacyl-sn-glycero-3-phosphate + CMP + 2 H(+). It participates in phospholipid metabolism; CDP-diacylglycerol degradation; phosphatidate from CDP-diacylglycerol: step 1/1. The sequence is that of CDP-diacylglycerol pyrophosphatase from Enterobacter sp. (strain 638).